We begin with the raw amino-acid sequence, 280 residues long: Large ribosomal subunit protein uL2 (280 aa).

Disordered regions lie at residues 1-58 (MAIR…GGGH) and 226-280 (MNPV…KHGR). Composition is skewed to basic residues over residues 37 to 58 (LHGH…GGGH) and 268 to 280 (IVRR…KHGR).

The protein belongs to the universal ribosomal protein uL2 family. Part of the 50S ribosomal subunit. Forms a bridge to the 30S subunit in the 70S ribosome.

In terms of biological role, one of the primary rRNA binding proteins. Required for association of the 30S and 50S subunits to form the 70S ribosome, for tRNA binding and peptide bond formation. It has been suggested to have peptidyltransferase activity; this is somewhat controversial. Makes several contacts with the 16S rRNA in the 70S ribosome. The sequence is that of Large ribosomal subunit protein uL2 from Mycobacterium avium (strain 104).